We begin with the raw amino-acid sequence, 515 residues long: Maturase K (515 aa).

Belongs to the intron maturase 2 family. MatK subfamily.

The protein resides in the plastid. The protein localises to the chloroplast. Its function is as follows. Usually encoded in the trnK tRNA gene intron. Probably assists in splicing its own and other chloroplast group II introns. The sequence is that of Maturase K from Pinus densiflora (Japanese red pine).